Consider the following 402-residue polypeptide: RNA-binding protein 42 (402 aa).

The segment at 240-275 is disordered; it reads ETASDDSVIGPSMPEPEPVHVEPVDTSTEDKKKGKQ. Residues 256 to 275 show a composition bias toward basic and acidic residues; that stretch reads EPVHVEPVDTSTEDKKKGKQ. An RRM domain is found at 303–381; the sequence is FRIFCGDLGN…RPIKLRKSAW (79 aa).

This sequence belongs to the RRM RBM42 family.

The protein resides in the nucleus. The protein localises to the cytoplasm. Functionally, may bind RNA. The polypeptide is RNA-binding protein 42 (rbm42) (Danio rerio (Zebrafish)).